Here is a 179-residue protein sequence, read N- to C-terminus: Acireductone dioxygenase (179 aa).

His-97, His-99, Glu-103, and His-141 together coordinate Fe(2+). The Ni(2+) site is built by His-97, His-99, Glu-103, and His-141.

It belongs to the acireductone dioxygenase (ARD) family. Monomer. The cofactor is Fe(2+). Requires Ni(2+) as cofactor.

The enzyme catalyses 1,2-dihydroxy-5-(methylsulfanyl)pent-1-en-3-one + O2 = 3-(methylsulfanyl)propanoate + CO + formate + 2 H(+). It carries out the reaction 1,2-dihydroxy-5-(methylsulfanyl)pent-1-en-3-one + O2 = 4-methylsulfanyl-2-oxobutanoate + formate + 2 H(+). The protein operates within amino-acid biosynthesis; L-methionine biosynthesis via salvage pathway; L-methionine from S-methyl-5-thio-alpha-D-ribose 1-phosphate: step 5/6. Catalyzes 2 different reactions between oxygen and the acireductone 1,2-dihydroxy-3-keto-5-methylthiopentene (DHK-MTPene) depending upon the metal bound in the active site. Fe-containing acireductone dioxygenase (Fe-ARD) produces formate and 2-keto-4-methylthiobutyrate (KMTB), the alpha-ketoacid precursor of methionine in the methionine recycle pathway. Ni-containing acireductone dioxygenase (Ni-ARD) produces methylthiopropionate, carbon monoxide and formate, and does not lie on the methionine recycle pathway. This is Acireductone dioxygenase from Granulibacter bethesdensis (strain ATCC BAA-1260 / CGDNIH1).